A 71-amino-acid chain; its full sequence is Large ribosomal subunit protein bL31 (71 aa).

Cys16, Cys18, Cys37, and Cys40 together coordinate Zn(2+).

This sequence belongs to the bacterial ribosomal protein bL31 family. Type A subfamily. As to quaternary structure, part of the 50S ribosomal subunit. Zn(2+) serves as cofactor.

Binds the 23S rRNA. This is Large ribosomal subunit protein bL31 from Aeromonas salmonicida (strain A449).